A 330-amino-acid chain; its full sequence is MKIAVIGGGSWGTTLADLAAKKGLDARLWVREQAVMNEIRSSRENSWYLPGRKLSDQLEVSTDPAAVAEGVSHFVFAVPCQFIRAAYQRFIKYLPKNAVVICASKGIELDTLMTMSQVCQDALASIKPRFAMLSGPSFAYEVIREMPTAVTLACKDKKAAKDVQEALSTPYFRIYTTTDVRGVELGGAIKNIVAIAAGVADGLGFGGDARAALITRGLHEMSRLGKAMGGDRQTFMGLSGMGDLVLTCTGDLSRNRQVGLRLAKGQKLLDILADMKMVAEGVKTAEAVHALGQKLGVEMPITEQVYAILYKDKDPSKAVYELMTRDLKDE.

NADPH is bound by residues Ser-10, Trp-11, Arg-31, and Lys-105. 3 residues coordinate sn-glycerol 3-phosphate: Lys-105, Gly-135, and Ser-137. An NADPH-binding site is contributed by Ala-139. Positions 190, 243, 253, 254, and 255 each coordinate sn-glycerol 3-phosphate. The active-site Proton acceptor is Lys-190. Arg-254 contributes to the NADPH binding site. Residues Val-278 and Glu-280 each coordinate NADPH.

This sequence belongs to the NAD-dependent glycerol-3-phosphate dehydrogenase family.

Its subcellular location is the cytoplasm. The catalysed reaction is sn-glycerol 3-phosphate + NAD(+) = dihydroxyacetone phosphate + NADH + H(+). It catalyses the reaction sn-glycerol 3-phosphate + NADP(+) = dihydroxyacetone phosphate + NADPH + H(+). Its pathway is membrane lipid metabolism; glycerophospholipid metabolism. Functionally, catalyzes the reduction of the glycolytic intermediate dihydroxyacetone phosphate (DHAP) to sn-glycerol 3-phosphate (G3P), the key precursor for phospholipid synthesis. This Solidesulfovibrio magneticus (strain ATCC 700980 / DSM 13731 / RS-1) (Desulfovibrio magneticus) protein is Glycerol-3-phosphate dehydrogenase [NAD(P)+].